Reading from the N-terminus, the 867-residue chain is Leucine--tRNA ligase (867 aa).

Positions 42-52 (PYPSGKLHMGH) match the 'HIGH' region motif. Residues 631 to 635 (KMSKS) carry the 'KMSKS' region motif. An ATP-binding site is contributed by lysine 634.

It belongs to the class-I aminoacyl-tRNA synthetase family.

Its subcellular location is the cytoplasm. It catalyses the reaction tRNA(Leu) + L-leucine + ATP = L-leucyl-tRNA(Leu) + AMP + diphosphate. This chain is Leucine--tRNA ligase, found in Dichelobacter nodosus (strain VCS1703A).